We begin with the raw amino-acid sequence, 199 residues long: N-(5'-phosphoribosyl)anthranilate isomerase (199 aa).

It belongs to the TrpF family.

It carries out the reaction N-(5-phospho-beta-D-ribosyl)anthranilate = 1-(2-carboxyphenylamino)-1-deoxy-D-ribulose 5-phosphate. The protein operates within amino-acid biosynthesis; L-tryptophan biosynthesis; L-tryptophan from chorismate: step 3/5. The polypeptide is N-(5'-phosphoribosyl)anthranilate isomerase (Streptococcus pneumoniae serotype 4 (strain ATCC BAA-334 / TIGR4)).